Consider the following 349-residue polypeptide: MAHQTGIHATPELKEFFAKARNGSIRLIKVVIEEEQLVLGSHKELKHAWEQDYDALIVPLLDESQPCYILYRLDSQNAQGYEWIFLSWSPDHSPVRLKMLYAATRATVKKEFGGGHIKDEIFGTLKEDVALSGYKKHVSLCAAPAPLTAAERELQEIKINEVKTEISVESKQQTLQGLSFPLRPEAEEAILLLKQKKINYIQLRLDLEKETVDLVHTKHTEIKDLPGRIPQDTARYHFFLYKHSHEGDHLESVVFIYSMPGYKCSIKERMLYSSCKNRLLDSVEQDFQLEIAKKIEIEDGAELTDEFLYDEVHPKQHAFKQAFAKPKGPAGKRGQKRLIKGPGENGEDS.

2 ADF-H domains span residues 4–139 (QTGI…KHVS) and 177–313 (GLSF…DEVH). The interval 321 to 349 (QAFAKPKGPAGKRGQKRLIKGPGENGEDS) is disordered.

The protein belongs to the actin-binding proteins ADF family. Twinfilin subfamily. In terms of assembly, interacts with G-actin; ADP-actin form and capping protein (CP).

It localises to the cytoplasm. The protein localises to the cytoskeleton. The protein resides in the perinuclear region. Actin-binding protein involved in motile and morphological processes. Inhibits actin polymerization, likely by sequestering G-actin. This Xenopus laevis (African clawed frog) protein is Twinfilin-2-A (twf2-a).